The sequence spans 140 residues: uncharacterized protein (140 aa).

A C2H2-type zinc finger spans residues Cys-21–His-42.

It to M.jannaschii MJECL27.

This is an uncharacterized protein from Methanocaldococcus jannaschii (strain ATCC 43067 / DSM 2661 / JAL-1 / JCM 10045 / NBRC 100440) (Methanococcus jannaschii).